The following is a 243-amino-acid chain: Outer membrane protein A (243 aa).

Beta stranded transmembrane passes span 1–8 (LAAKLSYP), 13–21 (LDIYTRLGG), 48–57 (PLAAVGVEYA), 62–69 (WATRLDYQ), and 88–96 (MLSLGVSYR). A run of 5 repeats spans residues 104–105 (AP), 106–107 (AP), 108–109 (AP), 110–111 (AP), and 112–113 (AP). Residues 104–113 (APAPAPAPAP) are 5 X 2 AA tandem repeats of A-P. The 129-residue stretch at 115–243 (VETKLFTLKS…RRVEIEVKGI (129 aa)) folds into the OmpA-like domain. A disulfide bridge connects residues Cys-215 and Cys-229.

This sequence belongs to the outer membrane OOP (TC 1.B.6) superfamily. OmpA family. Monomer and homodimer.

Its subcellular location is the cell outer membrane. Functionally, with TolR probably plays a role in maintaining the position of the peptidoglycan cell wall in the periplasm. Acts as a porin with low permeability that allows slow penetration of small solutes; an internal gate slows down solute passage. The chain is Outer membrane protein A from Serratia odorifera.